The primary structure comprises 414 residues: Serine hydroxymethyltransferase (414 aa).

(6S)-5,6,7,8-tetrahydrofolate contacts are provided by residues leucine 121 and 125–127 (GHL). At lysine 229 the chain carries N6-(pyridoxal phosphate)lysine.

This sequence belongs to the SHMT family. As to quaternary structure, homodimer. Pyridoxal 5'-phosphate serves as cofactor.

It localises to the cytoplasm. It catalyses the reaction (6R)-5,10-methylene-5,6,7,8-tetrahydrofolate + glycine + H2O = (6S)-5,6,7,8-tetrahydrofolate + L-serine. Its pathway is one-carbon metabolism; tetrahydrofolate interconversion. It participates in amino-acid biosynthesis; glycine biosynthesis; glycine from L-serine: step 1/1. In terms of biological role, catalyzes the reversible interconversion of serine and glycine with tetrahydrofolate (THF) serving as the one-carbon carrier. This reaction serves as the major source of one-carbon groups required for the biosynthesis of purines, thymidylate, methionine, and other important biomolecules. Also exhibits THF-independent aldolase activity toward beta-hydroxyamino acids, producing glycine and aldehydes, via a retro-aldol mechanism. This Verminephrobacter eiseniae (strain EF01-2) protein is Serine hydroxymethyltransferase.